The following is a 132-amino-acid chain: Large ribosomal subunit protein uL14 (132 aa).

The protein belongs to the universal ribosomal protein uL14 family. As to quaternary structure, part of the 50S ribosomal subunit. Forms a cluster with proteins L3 and L24e, part of which may contact the 16S rRNA in 2 intersubunit bridges.

In terms of biological role, binds to 23S rRNA. Forms part of two intersubunit bridges in the 70S ribosome. The polypeptide is Large ribosomal subunit protein uL14 (Halorubrum lacusprofundi (strain ATCC 49239 / DSM 5036 / JCM 8891 / ACAM 34)).